Here is a 361-residue protein sequence, read N- to C-terminus: Cyclin-Y-like protein 2 (361 aa).

The Cyclin N-terminal domain maps to 204-286; the sequence is MRLTAEFAIV…QFLKLINYNN (83 aa).

Belongs to the cyclin family. Cyclin Y subfamily.

The chain is Cyclin-Y-like protein 2 (CCNYL2) from Homo sapiens (Human).